We begin with the raw amino-acid sequence, 250 residues long: C-X-C motif chemokine 16 (250 aa).

The N-terminal stretch at 1–24 (MPLWELWFFLLALFLAWLTPPGNG) is a signal peptide. Topologically, residues 25-200 (NEGSMAGSCP…NVGATAGTSA (176 aa)) are extracellular. Disulfide bonds link cysteine 33/cysteine 63 and cysteine 35/cysteine 77. Residues 105–186 (VAHQQHLAPQ…AKSEARENQE (82 aa)) are disordered. Composition is skewed to polar residues over residues 128–147 (DSSTPAQTNLPSTLQPTQKP) and 163–172 (TSETDTSTVG). The helical transmembrane segment at 201–221 (LVPVLSLLVIIFLLTGVLLYV) threads the bilayer. At 222–250 (MCKKRQEQSRQYPPDPQLHYVPVASNINT) the chain is on the cytoplasmic side.

Belongs to the intercrine alpha (chemokine CxC) family. Glycosylated.

It is found in the membrane. Functionally, induces a strong chemotactic response. Induces calcium mobilization. Binds to CXCR6/Bonzo. Also acts as a scavenger receptor on macrophages, which specifically binds to OxLDL (oxidized low density lipoprotein), suggesting that it may be involved in pathophysiology such as atherogenesis. The protein is C-X-C motif chemokine 16 (CXCL16) of Sus scrofa (Pig).